Here is a 78-residue protein sequence, read N- to C-terminus: Small ribosomal subunit protein eS21 (78 aa).

The protein belongs to the eukaryotic ribosomal protein eS21 family.

This chain is Small ribosomal subunit protein eS21 (rps21), found in Dictyostelium discoideum (Social amoeba).